The primary structure comprises 985 residues: Ephrin type-A receptor 4-B (985 aa).

Residues 1–20 (MAGIVHGILFCGLFGLCWAV) form the signal peptide. Residues 21-547 (TGSRIYPASE…MIGEGTSPTV (527 aa)) lie on the Extracellular side of the membrane. In terms of domain architecture, Eph LBD spans 30–209 (EVTLLDSRSV…FYKKCPLTVR (180 aa)). Fibronectin type-III domains are found at residues 328-438 (PPSA…TNQA) and 439-536 (APST…TVPS). N-linked (GlcNAc...) asparagine glycosylation is found at Asn-340 and Asn-407. A helical transmembrane segment spans residues 548 to 569 (LLVSVAGSIVLVVILIAAFVIS). Residues 570 to 985 (RRRSKYSKAK…QQMQGRMVPV (416 aa)) are Cytoplasmic-facing. Residues Tyr-595 and Tyr-601 each carry the phosphotyrosine; by autocatalysis modification. The Protein kinase domain maps to 620 to 881 (IKIEKVIGVG…QIVSMLDKLI (262 aa)). Residues 626–634 (IGVGEFGEV) and Lys-652 each bind ATP. Asp-745 functions as the Proton acceptor in the catalytic mechanism. Tyr-778 and Tyr-927 each carry phosphotyrosine; by autocatalysis. An SAM domain is found at 910 to 974 (SQVASVLDWL…LSSVQGMRTQ (65 aa)). The short motif at 983 to 985 (VPV) is the PDZ-binding element.

Belongs to the protein kinase superfamily. Tyr protein kinase family. Ephrin receptor subfamily. In terms of tissue distribution, localized expression in a subset of neural crest and neural tissues in embryos.

It localises to the cell membrane. Its subcellular location is the early endosome. It carries out the reaction L-tyrosyl-[protein] + ATP = O-phospho-L-tyrosyl-[protein] + ADP + H(+). Its function is as follows. Receptor tyrosine kinase which binds membrane-bound ephrin family ligands residing on adjacent cells, leading to contact-dependent bidirectional signaling into neighboring cells. The signaling pathway downstream of the receptor is referred to as forward signaling while the signaling pathway downstream of the ephrin ligand is referred to as reverse signaling. Highly promiscuous, it has the unique property among Eph receptors to bind and to be physiologically activated by both GPI-anchored ephrin-A and transmembrane ephrin-B ligands including EFNA1 and EFNB3. Upon activation by ephrin ligands, modulates cell morphology and integrin-dependent cell adhesion through regulation of the Rac, Rap and Rho GTPases activity. Plays an important role in the development of the nervous system controlling different steps of axonal guidance including the establishment of the corticospinal projections. The sequence is that of Ephrin type-A receptor 4-B (epha4-b) from Xenopus laevis (African clawed frog).